The primary structure comprises 1043 residues: Ack-related non-receptor tyrosine kinase (1043 aa).

The Protein kinase domain occupies 113–379 (ITLCKELGQG…SDIVAKFPER (267 aa)). Residues 119 to 127 (LGQGEFGSV) and Lys146 each bind ATP. Asp241 acts as the Proton acceptor in catalysis. One can recognise an SH3 domain in the interval 379–444 (RRAQSVRAVV…RPTDTVAHLG (66 aa)). Residues 443-481 (LGSEPPCSNGTIENGFSEKEKGGKKNKKAEKESERERKK) form a disordered region. Basic and acidic residues predominate over residues 458-481 (FSEKEKGGKKNKKAEKESERERKK). The CRIB domain occupies 484–498 (ISEPVGDVRHTCHVG). Disordered regions lie at residues 514–644 (MCPT…SAAN), 790–842 (KINE…GWSS), 859–898 (KQAS…LSVR), and 932–993 (LIDG…RQFP). Residues 516–543 (PTSSSPSTSRGSQASPAPSHTSSSTTSS) show a composition bias toward low complexity. Polar residues predominate over residues 610–624 (GNQHSVQVHDQFSSL). Positions 630-644 (SLTPTAPPLTASAAN) are enriched in low complexity. Residues 785–812 (EQEVRKINEKSAREHRKTEDLLREERQK) adopt a coiled-coil conformation. The span at 790–818 (KINEKSAREHRKTEDLLREERQKEQKPGE) shows a compositional bias: basic and acidic residues. A compositionally biased stretch (polar residues) spans 825 to 842 (PAESLYSTRTPQQEGWSS). Over residues 870–884 (PTSSRLSTLDRSSIS) the composition is skewed to low complexity.

The protein belongs to the protein kinase superfamily. Tyr protein kinase family. Mg(2+) is required as a cofactor.

The catalysed reaction is L-tyrosyl-[protein] + ATP = O-phospho-L-tyrosyl-[protein] + ADP + H(+). It catalyses the reaction L-seryl-[protein] + ATP = O-phospho-L-seryl-[protein] + ADP + H(+). It carries out the reaction L-threonyl-[protein] + ATP = O-phospho-L-threonyl-[protein] + ADP + H(+). Probable tyrosine protein kinase which plays a role in vulva development, probably by acting as a negative regulator of the let-23/EGFR and let-60/ras pathway. Involved in the negative regulation of germline development. This chain is Ack-related non-receptor tyrosine kinase, found in Caenorhabditis elegans.